Reading from the N-terminus, the 218-residue chain is Small ribosomal subunit protein uS3c (218 aa).

The 76-residue stretch at 43–118 (IKDYVKKNKK…RLNIAITRIE (76 aa)) folds into the KH type-2 domain.

Belongs to the universal ribosomal protein uS3 family. Part of the 30S ribosomal subunit.

Its subcellular location is the plastid. The protein localises to the chloroplast. This chain is Small ribosomal subunit protein uS3c (rps3), found in Phalaenopsis aphrodite subsp. formosana (Moth orchid).